The following is a 104-amino-acid chain: MNKSILHTIIIYTLASCPYCIKAKALLDKKNVIYEEIEVSNFTQEEKEAFIKKSGGKNTVPQIFIDNMHVGGCDDLFNLEQDGRLDKLLETQPKNKNSLTVSGA.

A Glutaredoxin domain is found at 1–96 (MNKSILHTII…KLLETQPKNK (96 aa)). A disulfide bridge connects residues C17 and C20.

The protein belongs to the glutaredoxin family. In terms of assembly, monomer.

It is found in the cytoplasm. Has a glutathione-disulfide oxidoreductase activity in the presence of NADPH and glutathione reductase. Reduces low molecular weight disulfides and proteins. The chain is Glutaredoxin 1 (grxC1) from Rickettsia typhi (strain ATCC VR-144 / Wilmington).